Reading from the N-terminus, the 183-residue chain is Globin-like protein 26 (183 aa).

Residues 1 to 25 (MGSSTSTPAPPPKKNKPEGRKADNQ) form a disordered region. Glycine 2 is lipidated: N-myristoyl glycine. The short motif at 12 to 18 (PKKNKPE) is the Nuclear localization signal element. Residues 26 to 166 (ILNSYQKSIV…VVDQLRFGYS (141 aa)) form the Globin domain. Heme is bound by residues histidine 77 and histidine 109.

Belongs to the globin family. As to quaternary structure, homodimer. Occurs in an equilibrium of monomeric and dimeric forms in solution. In terms of tissue distribution, detected in the head mesodermal cell. In the tail region, detected in the stomatointestinal and anal depressor muscle cells.

It is found in the cytoplasm. The protein localises to the nucleus lamina. Its subcellular location is the cell membrane. Functionally, plays a role in electron transport. Utilizes the bis-histidyl hexacoordinated complex with iron to transfer electrons to cytochrome c and molecular oxygen. Plays a regulatory role in the periodicity of the defecation cycle under oxidative stress conditions. Not involved in imparting protection against general conditions of oxidative stress. May participate in redox reactions under anaerobic conditions. This Caenorhabditis elegans protein is Globin-like protein 26.